The following is a 197-amino-acid chain: MSEMLNHVASCRLPTEWGVFTMHGFEEANGQEHVALTVGNFSDGNPVLTRIHSECLTGDALFSRKCDCGPQLEAAMRAVQTEGRGIIVYLRQEGRGIGLINKIRAYHLQDQGMDTVEANLALGLPVDARDFRLAQSIYEYLGIRSVKLLTNNPEKIQTLKDAGINVVERIPLHVGENLENKRYLQTKADKLGHLMSE.

A GTP-binding site is contributed by 50-54 (RIHSE). Zn(2+) contacts are provided by Cys55, Cys66, and Cys68. GTP-binding positions include Gln71, 93 to 95 (EGR), and Thr115. The active-site Proton acceptor is the Asp127. Arg129 serves as the catalytic Nucleophile. GTP-binding residues include Thr150 and Lys155.

Belongs to the GTP cyclohydrolase II family. Requires Zn(2+) as cofactor.

The enzyme catalyses GTP + 4 H2O = 2,5-diamino-6-hydroxy-4-(5-phosphoribosylamino)-pyrimidine + formate + 2 phosphate + 3 H(+). The protein operates within cofactor biosynthesis; riboflavin biosynthesis; 5-amino-6-(D-ribitylamino)uracil from GTP: step 1/4. In terms of biological role, catalyzes the conversion of GTP to 2,5-diamino-6-ribosylamino-4(3H)-pyrimidinone 5'-phosphate (DARP), formate and pyrophosphate. The chain is GTP cyclohydrolase-2 from Neisseria meningitidis serogroup C (strain 053442).